Here is a 391-residue protein sequence, read N- to C-terminus: Chaperone protein DnaJ (391 aa).

Positions 4–68 constitute a J domain; sequence DFYDVLGVSR…ETRQQYDQLG (65 aa). Basic and acidic residues predominate over residues 53–79; it reads DVLTDEETRQQYDQLGHERFEEAEKRG. Disordered stretches follow at residues 53-94 and 117-136; these read DVLT…MGGA and FFGG…EQGR. 2 stretches are compositionally biased toward gly residues: residues 81–94 and 119–129; these read TGNG…MGGA and GGAGGGGGRGR. A CR-type zinc finger spans residues 152 to 234; that stretch reads GVSKQVTVRR…CGGQGQTRER (83 aa). Positions 165, 168, 182, 185, 208, 211, 222, and 225 each coordinate Zn(2+). CXXCXGXG motif repeat units follow at residues 165 to 172, 182 to 189, 208 to 215, and 222 to 229; these read CADCGGSG, CPQCDGQG, CSRCGGEG, and CSTCGGQG.

The protein belongs to the DnaJ family. Homodimer. Zn(2+) serves as cofactor.

Its subcellular location is the cytoplasm. Its function is as follows. Participates actively in the response to hyperosmotic and heat shock by preventing the aggregation of stress-denatured proteins and by disaggregating proteins, also in an autonomous, DnaK-independent fashion. Unfolded proteins bind initially to DnaJ; upon interaction with the DnaJ-bound protein, DnaK hydrolyzes its bound ATP, resulting in the formation of a stable complex. GrpE releases ADP from DnaK; ATP binding to DnaK triggers the release of the substrate protein, thus completing the reaction cycle. Several rounds of ATP-dependent interactions between DnaJ, DnaK and GrpE are required for fully efficient folding. Also involved, together with DnaK and GrpE, in the DNA replication of plasmids through activation of initiation proteins. The protein is Chaperone protein DnaJ of Halobacterium salinarum (strain ATCC 29341 / DSM 671 / R1).